The sequence spans 77 residues: U8-lycotoxin-Ls1i (77 aa).

The signal sequence occupies residues 1-20 (MKLIIFTGLVLFAIVSLIEV). Residues 21 to 26 (QADNER) constitute a propeptide that is removed on maturation.

The protein belongs to the neurotoxin 19 (CSTX) family. 08 (U8-Lctx) subfamily. Contains 4 disulfide bonds. In terms of tissue distribution, expressed by the venom gland.

The protein resides in the secreted. This is U8-lycotoxin-Ls1i from Lycosa singoriensis (Wolf spider).